A 1252-amino-acid chain; its full sequence is Elongator complex protein 1 (1252 aa).

Residues 814–1252 (VDVNDLYNVA…MMDWQHEILQ (439 aa)) form a mediates dimerization region. A Phosphoserine modification is found at S1094. The interval 1097-1116 (SSQYSGTSRRTGKTFRSSKN) is disordered. Positions 1106–1116 (RTGKTFRSSKN) are enriched in basic residues. The tract at residues 1111–1129 (FRSSKNRRKHERKLFSLKP) is required for binding to tRNA.

This sequence belongs to the ELP1/IKA1 family. Homodimer. Component of the elongator complex composed of Elp1, Elp2, Elp3, Elp4, Elp5 and Elp6. The elongator complex associates with and stabilizes microtubules; efficient interaction requires the full complex.

Its subcellular location is the cytoplasm. The protein localises to the nucleus. It localises to the cytoskeleton. The protein resides in the spindle. It functions in the pathway tRNA modification; 5-methoxycarbonylmethyl-2-thiouridine-tRNA biosynthesis. Functionally, component of the elongator complex, which is required for multiple tRNA modifications, including mcm5U (5-methoxycarbonylmethyl uridine), mcm5s2U (5-methoxycarbonylmethyl-2-thiouridine), and ncm5U (5-carbamoylmethyl uridine). The elongator complex catalyzes formation of carboxymethyluridine in the wobble base at position 34 in tRNAs. ELP1 binds to tRNA, mediating interaction of the elongator complex with tRNA. Binding by the elongator complex stabilizes microtubules and promotes their growth. This induces central spindle asymmetry, promoting polarized signaling endosome trafficking during asymmetric cell division and cell fate assignation of sensory organ precursor cells. Involved in protein synthesis-dependent long-term memory formation, probably as part of the elongator complex. The protein is Elongator complex protein 1 of Drosophila melanogaster (Fruit fly).